A 358-amino-acid chain; its full sequence is Protein RecA 2 (358 aa).

69-76 (GPESSGKT) is a binding site for ATP. The tract at residues 331–358 (GIGKSGAPSPRRRTSPRRPKVAARSAAV) is disordered. Residues 340 to 351 (PRRRTSPRRPKV) are compositionally biased toward basic residues.

The protein belongs to the RecA family.

The protein resides in the cytoplasm. Can catalyze the hydrolysis of ATP in the presence of single-stranded DNA, the ATP-dependent uptake of single-stranded DNA by duplex DNA, and the ATP-dependent hybridization of homologous single-stranded DNAs. It interacts with LexA causing its activation and leading to its autocatalytic cleavage. The chain is Protein RecA 2 from Myxococcus xanthus.